The chain runs to 466 residues: Cysteine--tRNA ligase (466 aa).

Residue Cys-28 coordinates Zn(2+). The 'HIGH' region motif lies at 30 to 40 (PTVYNYIHIGN). Zn(2+) is bound by residues Cys-208, His-233, and Glu-237. Positions 265–269 (KMSKS) match the 'KMSKS' region motif. Residue Lys-268 coordinates ATP.

This sequence belongs to the class-I aminoacyl-tRNA synthetase family. Monomer. Requires Zn(2+) as cofactor.

Its subcellular location is the cytoplasm. It catalyses the reaction tRNA(Cys) + L-cysteine + ATP = L-cysteinyl-tRNA(Cys) + AMP + diphosphate. The chain is Cysteine--tRNA ligase from Staphylococcus aureus (strain USA300).